A 334-amino-acid polypeptide reads, in one-letter code: Biotin synthase (334 aa).

A Radical SAM core domain is found at 48–275; sequence NQVQTSQLLS…RSMVRLSAGR (228 aa). Residues C63, C67, and C70 each coordinate [4Fe-4S] cluster. [2Fe-2S] cluster-binding residues include C107, C138, C198, and R270.

Belongs to the radical SAM superfamily. Biotin synthase family. Homodimer. [4Fe-4S] cluster is required as a cofactor. The cofactor is [2Fe-2S] cluster.

It catalyses the reaction (4R,5S)-dethiobiotin + (sulfur carrier)-SH + 2 reduced [2Fe-2S]-[ferredoxin] + 2 S-adenosyl-L-methionine = (sulfur carrier)-H + biotin + 2 5'-deoxyadenosine + 2 L-methionine + 2 oxidized [2Fe-2S]-[ferredoxin]. Its pathway is cofactor biosynthesis; biotin biosynthesis; biotin from 7,8-diaminononanoate: step 2/2. Functionally, catalyzes the conversion of dethiobiotin (DTB) to biotin by the insertion of a sulfur atom into dethiobiotin via a radical-based mechanism. This chain is Biotin synthase, found in Maricaulis maris (strain MCS10) (Caulobacter maris).